Reading from the N-terminus, the 213-residue chain is Large ribosomal subunit protein uL18c (213 aa).

This sequence belongs to the universal ribosomal protein uL18 family.

The protein localises to the plastid. Its subcellular location is the apicoplast. In Plasmodium falciparum (isolate 3D7), this protein is Large ribosomal subunit protein uL18c (RPL18).